We begin with the raw amino-acid sequence, 429 residues long: Glutamyl-tRNA reductase (429 aa).

Residues 52 to 55, S110, 115 to 117, and Q121 each bind substrate; these read TCNR and EAQ. The active-site Nucleophile is the C53. Residue 190 to 195 participates in NADP(+) binding; it reads GAGAMI.

This sequence belongs to the glutamyl-tRNA reductase family. In terms of assembly, homodimer.

The catalysed reaction is (S)-4-amino-5-oxopentanoate + tRNA(Glu) + NADP(+) = L-glutamyl-tRNA(Glu) + NADPH + H(+). It functions in the pathway porphyrin-containing compound metabolism; protoporphyrin-IX biosynthesis; 5-aminolevulinate from L-glutamyl-tRNA(Glu): step 1/2. Catalyzes the NADPH-dependent reduction of glutamyl-tRNA(Glu) to glutamate 1-semialdehyde (GSA). This chain is Glutamyl-tRNA reductase, found in Verminephrobacter eiseniae (strain EF01-2).